Consider the following 793-residue polypeptide: Caldesmon (793 aa).

The residue at position 12 (Arg12) is a Phosphoserine. At Glu21 the chain carries Phosphotyrosine. Disordered stretches follow at residues 26 to 94 (AYQR…DDEA), 108 to 407 (QKRL…IKGE), and 434 to 458 (KKQG…KPTF). Positions 26–207 (AYQRNDDDEE…PKRGSIGENQ (182 aa)) are myosin and calmodulin-binding. Over residues 47-56 (QERLRQKQEE) the composition is skewed to basic and acidic residues. Over residues 60 to 74 (GQVTDQVEVNAQNSV) the composition is skewed to polar residues. Over residues 108–122 (QKRLQEALERQKEFD) the composition is skewed to basic and acidic residues. Ser129 bears the Phosphoserine mark. Composition is skewed to basic and acidic residues over residues 146–162 (TTEK…RYEI) and 173–188 (QKND…KEDK). A phosphoserine mark is found at Glu196 and Ser202. Residues Ile203 and Glu209 each participate in a glycyl lysine isopeptide (Lys-Gly) (interchain with G-Cter in SUMO2) cross-link. Composition is skewed to basic and acidic residues over residues 236–407 (EEPK…IKGE) and 435–458 (KQGE…KPTF). 3 consecutive repeat copies span residues 319–332 (EEEK…QRIK), 333–346 (EEEK…QRIK), and 347–360 (EEEK…QRIK). Residues 319-375 (EEEKRAAEERQRIKEEEKRAAEERQRIKEEEKRAAEERQRIKEEEKRAAEERQRARA) form a 3 X 14 AA tandem repeats of E-E-E-K-R-A-A-E-E-R-Q-R-I-K region. Lys459 participates in a covalent cross-link: Glycyl lysine isopeptide (Lys-Gly) (interchain with G-Cter in SUMO2). The segment at 492-640 (KSQNGEFMTH…KKPFKCFTPK (149 aa)) is disordered. 2 stretches are compositionally biased toward basic and acidic residues: residues 532-558 (AGKR…KQKQ) and 566-633 (EELK…DKKP). The tract at residues 564 to 621 (ELEELKKKREERRKVLEEEEQRRKQEEADRKLREEEEKRRLKEEIERRRAEAAEKRQK) is tropomyosin-binding. At Ser643 the chain carries Phosphoserine. Residue Lys645 forms a Glycyl lysine isopeptide (Lys-Gly) (interchain with G-Cter in SUMO2) linkage. Residues 653-686 (LNKSVQKSSGVKSTHQAAIVSKIDSRLEQYTSAI) are strong actin-binding. Residue Ser656 is modified to Phosphoserine. Positions 664–674 (KSTHQAAIVSK) are tropomyosin-binding. Disordered regions lie at residues 687 to 706 (EGTK…PVPA), 721 to 740 (VFSS…GLKV), and 747 to 793 (NEWL…PTKV). Positions 716–722 (WEKGNVF) are calmodulin-binding. Residues 721 to 733 (VFSSPTAAGTPNK) show a composition bias toward polar residues. Ser724 carries the phosphoserine modification. Phosphothreonine is present on residues Thr730 and Thr753. Ser759 carries the phosphoserine modification. Basic and acidic residues predominate over residues 765 to 784 (SDLRPGDVSSKRNLWEKQSV). The tract at residues 768–793 (RPGDVSSKRNLWEKQSVDKVTSPTKV) is weak actin-binding. Ser789 bears the Phosphoserine mark.

It belongs to the caldesmon family. Post-translationally, in non-muscle cells, phosphorylation by CDK1 during mitosis causes caldesmon to dissociate from microfilaments. Phosphorylation reduces caldesmon binding to actin, myosin, and calmodulin as well as its inhibition of actomyosin ATPase activity. Phosphorylation also occurs in both quiescent and dividing smooth muscle cells with similar effects on the interaction with actin and calmodulin and on microfilaments reorganization. CDK1-mediated phosphorylation promotes Schwann cell migration during peripheral nerve regeneration. High-molecular-weight caldesmon (isoform 1) is predominantly expressed in smooth muscles, whereas low-molecular-weight caldesmon (isoforms 2, 3, 4 and 5) are widely distributed in non-muscle tissues and cells. Not expressed in skeletal muscle or heart.

Its subcellular location is the cytoplasm. It localises to the cytoskeleton. The protein resides in the myofibril. The protein localises to the stress fiber. Actin- and myosin-binding protein implicated in the regulation of actomyosin interactions in smooth muscle and nonmuscle cells (could act as a bridge between myosin and actin filaments). Stimulates actin binding of tropomyosin which increases the stabilization of actin filament structure. In muscle tissues, inhibits the actomyosin ATPase by binding to F-actin. This inhibition is attenuated by calcium-calmodulin and is potentiated by tropomyosin. Interacts with actin, myosin, two molecules of tropomyosin and with calmodulin. Also plays an essential role during cellular mitosis and receptor capping. Involved in Schwann cell migration during peripheral nerve regeneration. This Homo sapiens (Human) protein is Caldesmon (CALD1).